The primary structure comprises 594 residues: Jacalin-related lectin 44 (594 aa).

The segment at 1–23 (MIQKLGAKGIKSDERNQREWDDG) is disordered. Jacalin-type lectin domains follow at residues 2–148 (IQKL…YFIS), 151–293 (PTRL…YFST), 296–441 (PNKL…YYRP), and 448–588 (VKRL…HVIP). Basic and acidic residues predominate over residues 10–23 (IKSDERNQREWDDG).

It belongs to the jacalin lectin family.

The protein is Jacalin-related lectin 44 (JAL44) of Arabidopsis thaliana (Mouse-ear cress).